The following is a 496-amino-acid chain: UDP-glycosyltransferase 73C4 (496 aa).

UDP-alpha-D-glucose is bound by residues S297, 357 to 359 (SPQ), 374 to 382 (HCGWNSTLE), and 396 to 399 (FGDQ). Residues 450-475 (SDDAKERRRRVKELGESAHKAVEEGG) are disordered. A compositionally biased stretch (basic and acidic residues) spans 451–472 (DDAKERRRRVKELGESAHKAVE).

It belongs to the UDP-glycosyltransferase family.

The polypeptide is UDP-glycosyltransferase 73C4 (UGT73C4) (Arabidopsis thaliana (Mouse-ear cress)).